The primary structure comprises 347 residues: Purine-rich element-binding protein gamma (347 aa).

2 disordered regions span residues 1 to 34 and 133 to 169; these read MERA…YPQA and GHRQ…HPHS. Over residues 9–24 the composition is skewed to gly residues; the sequence is GGGGRGRGGKNVGGSG. A DNA-binding region spans residues 51–293; sequence AGGAAEIQEL…GIFLKVSEVR (243 aa). Residues 134–146 are compositionally biased toward basic and acidic residues; it reads HRQEHGHSKEQGS. Phosphoserine occurs at positions 160, 163, and 339.

This sequence belongs to the PUR DNA-binding protein family. As to expression, isoform 1 is expressed in testis and glioblastoma. Isoform 2 is expressed in fetal lung.

Its subcellular location is the nucleus. In Homo sapiens (Human), this protein is Purine-rich element-binding protein gamma (PURG).